Consider the following 147-residue polypeptide: 3-hydroxyacyl-[acyl-carrier-protein] dehydratase FabZ (147 aa).

Residue His53 is part of the active site.

The protein belongs to the thioester dehydratase family. FabZ subfamily.

The protein localises to the cytoplasm. The catalysed reaction is a (3R)-hydroxyacyl-[ACP] = a (2E)-enoyl-[ACP] + H2O. In terms of biological role, involved in unsaturated fatty acids biosynthesis. Catalyzes the dehydration of short chain beta-hydroxyacyl-ACPs and long chain saturated and unsaturated beta-hydroxyacyl-ACPs. This chain is 3-hydroxyacyl-[acyl-carrier-protein] dehydratase FabZ, found in Synechococcus sp. (strain WH7803).